The following is a 73-amino-acid chain: uncharacterized protein (73 aa).

The N-terminal stretch at 1-23 (MLHLIKMVSKIVLLITLVFIVSA) is a signal peptide.

This is an uncharacterized protein from Acheta domesticus (House cricket).